We begin with the raw amino-acid sequence, 483 residues long: Serine hydroxymethyltransferase, cytosolic (483 aa).

At lysine 257 the chain carries N6-(pyridoxal phosphate)lysine.

Belongs to the SHMT family. In terms of assembly, homotetramer. Identified in complex with ABRAXAS2 and the other subunits of the BRISC complex, at least composed of ABRAXAS2, BRCC3/BRCC36, BABAM2 and BABAM1/NBA1. It depends on pyridoxal 5'-phosphate as a cofactor.

The protein resides in the cytoplasm. It carries out the reaction (6R)-5,10-methylene-5,6,7,8-tetrahydrofolate + glycine + H2O = (6S)-5,6,7,8-tetrahydrofolate + L-serine. The protein operates within one-carbon metabolism; tetrahydrofolate interconversion. Interconversion of serine and glycine. The protein is Serine hydroxymethyltransferase, cytosolic (SHMT1) of Pongo abelii (Sumatran orangutan).